The chain runs to 266 residues: F-actin-capping protein subunit alpha (266 aa).

This sequence belongs to the F-actin-capping protein alpha subunit family. Heterodimer of an alpha and a beta subunit.

The protein localises to the cytoplasm. It is found in the cytoskeleton. Its function is as follows. F-actin-capping proteins bind in a Ca(2+)-independent manner to the fast growing ends of actin filaments (barbed end) thereby blocking the exchange of subunits at these ends. Unlike other capping proteins (such as gelsolin and severin), these proteins do not sever actin filaments. The protein is F-actin-capping protein subunit alpha (CAP1) of Debaryomyces hansenii (strain ATCC 36239 / CBS 767 / BCRC 21394 / JCM 1990 / NBRC 0083 / IGC 2968) (Yeast).